Consider the following 289-residue polypeptide: Transcriptional regulator Rob (289 aa).

An HTH araC/xylS-type domain is found at 8–106 (RDLLIWLEGH…SQTPALYRRS (99 aa)). 2 DNA-binding regions (H-T-H motif) span residues 25–46 (DNVA…KDVT) and 73–96 (ILDI…KKQF).

Functionally, transcriptional regulator. Represses transcription of genes belonging to the flagellar regulon, including flhD, flhB and fliC; probably thereby leading to repression of motility. Binds to regulatory regions of target genes, including the promoters of the flhDC operon and of P-type ATPase mgtA. Involved in post-transcriptional regulation of expression. Represses expression of the flhDC operon in a post-transcriptional manner. Binds to the right arm of the replication origin oriC of the chromosome. Rob binding may influence the formation of the nucleoprotein structure, required for oriC function in the initiation of replication. This chain is Transcriptional regulator Rob, found in Salmonella typhimurium (strain LT2 / SGSC1412 / ATCC 700720).